An 887-amino-acid polypeptide reads, in one-letter code: Alanine--tRNA ligase (887 aa).

His581, His585, Cys683, and His687 together coordinate Zn(2+).

It belongs to the class-II aminoacyl-tRNA synthetase family. Zn(2+) serves as cofactor.

It localises to the cytoplasm. The enzyme catalyses tRNA(Ala) + L-alanine + ATP = L-alanyl-tRNA(Ala) + AMP + diphosphate. In terms of biological role, catalyzes the attachment of alanine to tRNA(Ala) in a two-step reaction: alanine is first activated by ATP to form Ala-AMP and then transferred to the acceptor end of tRNA(Ala). Also edits incorrectly charged Ser-tRNA(Ala) and Gly-tRNA(Ala) via its editing domain. The chain is Alanine--tRNA ligase from Ehrlichia ruminantium (strain Welgevonden).